We begin with the raw amino-acid sequence, 160 residues long: Cyclic pyranopterin monophosphate synthase (160 aa).

Residues 77 to 79 (MCH) and 114 to 115 (ME) contribute to the substrate site. The active site involves aspartate 129.

The protein belongs to the MoaC family. Homohexamer; trimer of dimers.

It catalyses the reaction (8S)-3',8-cyclo-7,8-dihydroguanosine 5'-triphosphate = cyclic pyranopterin phosphate + diphosphate. It functions in the pathway cofactor biosynthesis; molybdopterin biosynthesis. Functionally, catalyzes the conversion of (8S)-3',8-cyclo-7,8-dihydroguanosine 5'-triphosphate to cyclic pyranopterin monophosphate (cPMP). This chain is Cyclic pyranopterin monophosphate synthase, found in Listeria monocytogenes serotype 4a (strain HCC23).